A 302-amino-acid chain; its full sequence is NAD kinase 2 (302 aa).

The Proton acceptor role is filled by Asp-79. Residues 79–80 (DG), 153–154 (NE), Asp-183, 194–199 (TAYSLS), Ala-218, and Asn-252 contribute to the NAD(+) site.

The protein belongs to the NAD kinase family. Requires a divalent metal cation as cofactor.

It is found in the cytoplasm. The catalysed reaction is NAD(+) + ATP = ADP + NADP(+) + H(+). Involved in the regulation of the intracellular balance of NAD and NADP, and is a key enzyme in the biosynthesis of NADP. Catalyzes specifically the phosphorylation on 2'-hydroxyl of the adenosine moiety of NAD to yield NADP. The polypeptide is NAD kinase 2 (Prochlorococcus marinus subsp. pastoris (strain CCMP1986 / NIES-2087 / MED4)).